Reading from the N-terminus, the 254-residue chain is E3 ubiquitin-protein ligase NEURL3 (254 aa).

The NHR domain maps to 17–174; the sequence is ALSFHGDATG…TTKAIELLDP (158 aa). The RING-type zinc-finger motif lies at 197-236; that stretch reads CVICFHNTANTRLMPCGHSQFCGSCAWHIFKDTARCPMCR.

It localises to the cytoplasm. It catalyses the reaction S-ubiquitinyl-[E2 ubiquitin-conjugating enzyme]-L-cysteine + [acceptor protein]-L-lysine = [E2 ubiquitin-conjugating enzyme]-L-cysteine + N(6)-ubiquitinyl-[acceptor protein]-L-lysine.. It participates in protein modification; protein ubiquitination. E3 ubiquitin-protein ligase that plays a role in various biological processes such as lung development or innate immunity. Seems to utilize UBE2E1. Promotes innate antiviral response by catalyzing 'Lys-63'-linked ubiquitination of IRF7. Also inhibits hepatitis C virus assembly by directly binding to viral E1 envelope glycoprotein to disrupt its interaction with E2. Plays an essential role in TLR4-mediated activation of MAPK pathways by promoting 'Lys-48'-linked polyubiquitination of the phosphatase DUSP1/MKP1. The sequence is that of E3 ubiquitin-protein ligase NEURL3 (Neurl3) from Rattus norvegicus (Rat).